The sequence spans 567 residues: Monodechloroaminopyrrolnitrin halogenase PrnC (567 aa).

It participates in antibiotic biosynthesis. Its function is as follows. Involved in the biosynthesis of the antifungal antibiotic pyrrolnitrin. Catalyzes the chlorination of monodechloroaminopyrrolnitrin (MDA) at the 3 position to form aminopyrrolnitrin (APRN). This chain is Monodechloroaminopyrrolnitrin halogenase PrnC (prnC), found in Pseudomonas fluorescens.